The chain runs to 495 residues: Glucokinase (495 aa).

The Hexokinase domain maps to 3 to 483; the sequence is SALLDEAARI…SGVGAALIAL (481 aa). The interval 57-206 is hexokinase small subdomain; the sequence is NGTEKGLYLA…GLPVRVAALV (150 aa). Residue K93 participates in ATP binding. Residues 149-175 form a glucose-binding region; that stretch reads DLGFTFSFPVRQLGINKGTLIRWTKGF. The interval 207–472 is hexokinase large subdomain; that stretch reads NDTVGTLMAR…KKIRIGISKD (266 aa). 472–477 contacts ATP; the sequence is DGSGVG.

It belongs to the hexokinase family. Monomer.

It carries out the reaction D-glucose + ATP = D-glucose 6-phosphate + ADP + H(+). The catalysed reaction is a D-hexose + ATP = a D-hexose 6-phosphate + ADP + H(+). It catalyses the reaction D-mannose + ATP = D-mannose 6-phosphate + ADP + H(+). The enzyme catalyses D-glucosamine + ATP = D-glucosamine 6-phosphate + ADP + H(+). The protein operates within carbohydrate metabolism; hexose metabolism. Its pathway is carbohydrate degradation; glycolysis; D-glyceraldehyde 3-phosphate and glycerone phosphate from D-glucose: step 1/4. The enzyme has great affinity for glucose. Mannose, 2-deoxyglucose and glucosamine can serve as substrates. This Aspergillus niger protein is Glucokinase (glkA).